Consider the following 394-residue polypeptide: Suppressor APC domain-containing protein 2 (394 aa).

Disordered regions lie at residues 1-23 (MAGA…STEG), 95-125 (LLSA…RLVF), and 150-188 (GPSA…SSSA). Polar residues predominate over residues 177–188 (SQSAALEPSSSA). Thr-219 is subject to Phosphothreonine. The stretch at 227–277 (GLLKQMKELEQEKEVLLQGLEMMARGRDWYQQQLQRVQERQRRLGQSRASA) forms a coiled coil. Ser-284 is modified (phosphoserine). Residues 336 to 384 (QQQTILMLKEQNRLLTQEVTEKSERITQLEQEKSALIKQLFEARALSQQ) adopt a coiled-coil conformation.

As to quaternary structure, interacts with a spindle orientation complex at least composed of GNAI1, GPSM2 and NUMA1. Interacts with GPSM2 (via TPR motifs); this interaction is required to prevent GPSM2 anchoring at the mitotic apical cortex and is inhibited in presence of NUMA1 in a dose dependent manner. Interacts with PARD3. In terms of tissue distribution, expressed in 5-month-old fetal tissues, including stomach, intestine, colon, liver, brain, lung, heart, spleen and kidney. Undetectable in non-cancerous adult tissues. Expressed in many primary gastric carcinoma, but almost not in adjacent normal mucosa. Expressed preferentially in M and G1 phases, compared to S and G2 phases. Expression is up-regulated in hepatocellular carcinoma (HCC) and colorectal cancer (CRC) tissues (at protein level).

It is found in the cytoplasm. Its subcellular location is the nucleus. The protein localises to the cell cortex. It localises to the apical cell membrane. The protein resides in the cell junction. It is found in the tight junction. Functionally, plays a role in planar mitotic spindle orientation in retinal progenitor cells (RPCs) and promotes the production of symmetric terminal divisions. Negatively regulates the mitotic apical cortex localization of GPSM2. Involved also in positive regulation of cell proliferation and tumor cell growth. This is Suppressor APC domain-containing protein 2 from Homo sapiens (Human).